The primary structure comprises 398 residues: Galactose-3-O-sulfotransferase 2 (398 aa).

The Cytoplasmic portion of the chain corresponds to 1 to 10 (MMSMLGGLQR). A helical; Signal-anchor for type II membrane protein transmembrane segment spans residues 11-31 (YFRVILLLLLALTLLLLAGFL). Over 32-398 (HSDLELDTPL…PLKNIPFLGA (367 aa)) the chain is Lumenal. N-linked (GlcNAc...) asparagine glycans are attached at residues asparagine 79, asparagine 132, asparagine 179, asparagine 287, asparagine 330, and asparagine 360.

Belongs to the galactose-3-O-sulfotransferase family. As to expression, ubiquitous. Detected in heart, stomach, colon, liver and spleen, in epithelial cells lining the lower to middle layer of the crypts in colonic mucosa, hepatocytes surrounding the central vein of the liver, extravillous cytotrophoblasts in the basal plate of the septum of the placenta, renal tubules of the kidney, and neuronal cells of the cerebral cortex.

The protein resides in the golgi apparatus. Its subcellular location is the golgi stack membrane. Its pathway is protein modification; carbohydrate sulfation. With respect to regulation, strongly inhibited by Cu(2+) and Zn(2+). Transfers a sulfate group to the hydroxyl group at C3 of non-reducing beta-galactosyl residues. Acts both on type 1 (Gal-beta-1,3-GlcNAc) and type 2 (Gal-beta-1,4-GlcNAc) chains with similar efficiency. The protein is Galactose-3-O-sulfotransferase 2 (GAL3ST2) of Homo sapiens (Human).